Reading from the N-terminus, the 541-residue chain is MDSRRSLLVLALIFISFLVYQQWQLDKNPPVQTEQTTSITATSDVPASSPSNSQAIADSQTRGRIITLENDVFRLKIDTLGGDVISSELLKYDAELDSKTPFELLKDTKEHIYIAQSGLIGKNGIDTRSGRAQYQIEGDNFKLAEGQESLSVPLLFEKDGVTYQKIFVLKRGSYDLGVDYKIDNQSGQAIEVEPYGQLKHSIIESSGNVAMPTYTGGAYSSSETNYKKYSFADMQDNNLSIDTKAGWVAVLQHYFVSAWIPNQDVNNQLYTITDSKNNVASIGYRGPVVTIPAGSQETITSSLWTGPKLQNQMATVANNLDLTVDYGWAWFIAKPLFWLLTFIQGIVSNWGLAIICVTIVVKAILYPLTKAQYTSMAKMRILQPKMQEMRERFGDDRQRMSQEMMKLYKEEKVNPLGGCLPILLQMPIFIALYWTFLEAVELRHAPFFGWIQDLSAQDPYYILPILMGISMFLLQKMSPTPVTDPTQQKVMNFMPLVFMFFFLWFPSGLVLYWLVSNLITIAQQQLIYRGLEKKGLHSRKK.

The chain crosses the membrane as a helical span at residues 6 to 26 (SLLVLALIFISFLVYQQWQLD). The interval 34–56 (EQTTSITATSDVPASSPSNSQAI) is disordered. 4 helical membrane passes run 337–357 (FWLLTFIQGIVSNWGLAIICV), 416–436 (LGGCLPILLQMPIFIALYWTF), 454–474 (LSAQDPYYILPILMGISMFLL), and 495–515 (PLVFMFFFLWFPSGLVLYWLV).

This sequence belongs to the OXA1/ALB3/YidC family. Type 1 subfamily. As to quaternary structure, interacts with the Sec translocase complex via SecD. Specifically interacts with transmembrane segments of nascent integral membrane proteins during membrane integration.

It is found in the cell inner membrane. In terms of biological role, required for the insertion and/or proper folding and/or complex formation of integral membrane proteins into the membrane. Involved in integration of membrane proteins that insert both dependently and independently of the Sec translocase complex, as well as at least some lipoproteins. Aids folding of multispanning membrane proteins. This chain is Membrane protein insertase YidC, found in Haemophilus influenzae (strain 86-028NP).